We begin with the raw amino-acid sequence, 590 residues long: Acyl-CoA ligase sidI (590 aa).

Residues 6 to 14 (RLQQTLSHL) carry the PTS2-type peroxisomal targeting signal motif. Residues 220-228 (TSGSTGNPK), 359-364 (SSYGLT), Asp-449, and Arg-464 each bind ATP. Thr-364 contributes to the substrate binding site. CoA contacts are provided by residues 472-474 (GGE) and 543-545 (YFF). Lys-563 is a binding site for ATP.

Belongs to the ATP-dependent AMP-binding enzyme family.

Its subcellular location is the peroxisome. Its pathway is siderophore biosynthesis. Acyl-CoA ligase; part of the siderophore biosynthetic pathway. Aspergillus fumigatus produces 4 types of siderophores, low-molecular-mass iron chelators, including excreted fusarinine C (FsC) and triacetylfusarinine C (TAFC) for iron uptake and intacellular ferricrocin (FC) for hyphal and hydroxyferricrocin (HFC) for conidial iron distribution and storage. TAFC consists of 3 N(2)-acetyl-N(5)-anhydromevalonyl-N(5)-hydroxyornithine residues cyclically linked by ester bonds; FC is a cyclic hexapeptide with the structure Gly-Ser-Gly-(N(5)-acetyl-N(5)-hydroxyornithine)x3. The biosynthesis of all four siderophores depends on the hydroxylation of ornithine, catalyzed by the monooxygenase sidA. Subsequently, the pathways for biosynthesis of extra- and intracellular siderophores split. For biosynthesis of extracellular siderophores, the transacylase sidF transfers anhydromevalonyl to N(5)-hydroxyornithine. The required anhydromevalonyl-CoA moiety is derived from mevalonate by CoA ligation and dehydration catalyzed by sidI and sidH respectively. The acetylation of N(5)-hydroxyornithine for FC biosynthesis involves the constitutively expressed sidL. FC is hydroxylated to HFC by an as yet uncharacterized enzyme during conidiation. Assembly of fusarinine C (FsC) and FC is catalyzed by two different nonribosomal peptide synthetases (NRPS), sidD and sidC respectively. Subsequently, sidG catalyzes N2-acetylation of FsC for forming TAFC. Both extra- and intracellular siderophores are crucial for growth during iron limitation and virulence. This is Acyl-CoA ligase sidI from Aspergillus fumigatus (strain ATCC MYA-4609 / CBS 101355 / FGSC A1100 / Af293) (Neosartorya fumigata).